The sequence spans 421 residues: General transcription factor IIH subunit 2 (421 aa).

The tract at residues 1 to 26 (MSNQRKRSNDEREEEDDEDAEGIGEW) is disordered. The segment covering 11 to 24 (EREEEDDEDAEGIG) has biased composition (acidic residues). One can recognise a VWFA domain in the interval 83 to 272 (YLYIVIDFSR…IAEFAIANLI (190 aa)). The segment at 362–408 (CFGCQQSLIGAGNKPVPCVTCRKCKHYFCLDCDIYIHESLHNCPGCE) adopts an RING-type zinc-finger fold.

The protein belongs to the GTF2H2 family. As to quaternary structure, component of the 7-subunit TFIIH core complex composed of XPB, XPD, TFB1/GTF2H1, GTF2H2/P44, TFB4/GTF2H3, TFB2/GTF2H4 and TFB5/GTF2H5, which is active in NER. The core complex associates with the 3-subunit CDK-activating kinase (CAK) module composed of CYCH1/cyclin H1, CDKD and MAT1/At4g30820 to form the 10-subunit holoenzyme (holo-TFIIH) active in transcription. Interacts with XPD.

Its subcellular location is the nucleus. In terms of biological role, component of the general transcription and DNA repair factor IIH (TFIIH) core complex, which is involved in general and transcription-coupled nucleotide excision repair (NER) of damaged DNA and, when complexed to CAK, in RNA transcription by RNA polymerase II. In NER, TFIIH acts by opening DNA around the lesion to allow the excision of the damaged oligonucleotide and its replacement by a new DNA fragment. In transcription, TFIIH has an essential role in transcription initiation. When the pre-initiation complex (PIC) has been established, TFIIH is required for promoter opening and promoter escape. Phosphorylation of the C-terminal tail (CTD) of the largest subunit of RNA polymerase II by the kinase module CAK controls the initiation of transcription. Can restore UV resistance in the NER-deficient ssl1-1 yeast mutant. The chain is General transcription factor IIH subunit 2 from Arabidopsis thaliana (Mouse-ear cress).